The following is a 371-amino-acid chain: Jasmonate-induced oxygenase 2 (371 aa).

The 102-residue stretch at 219-320 (NIGACLRVNY…RVSLAFFYNP (102 aa)) folds into the Fe2OG dioxygenase domain. Residue Arg-225 participates in jasmonate binding. Residues Asn-227 and Tyr-229 each coordinate 2-oxoglutarate. 3 residues coordinate Fe cation: His-244, Asp-246, and His-301. Residues Arg-311 and Ser-313 each contribute to the 2-oxoglutarate site. Jasmonate-binding residues include Arg-350 and Arg-354.

Belongs to the iron/ascorbate-dependent oxidoreductase family. Requires L-ascorbate as cofactor. The cofactor is Fe(2+).

It carries out the reaction jasmonate + 2-oxoglutarate + O2 = (1R,2R)-12-hydroxyjasmonate + succinate + CO2. Its function is as follows. 2-oxoglutarate-dependent dioxygenase involved in the oxidation of jasmonate (JA), a stress-induced phytohormone synthesized in response to attack by pathogens and herbivores, which triggers the activation of defense responses via the JA-mediated signaling pathway. Converts JA to 12-hydroxyjasmonate (12OH-JA), an inactive form of JA. Is specific to free JA, and cannot oxidize the bioactive form jasmonoyl-L-isoleucine (JA-Ile) or other JA-amino acid conjugates. Prevents over-accumulation of JA and indirectly its bioactive form JA-Ile under stress response. Acts as a negative regulator of JA-mediated defense signaling, by contributing to 12OH-JA accumulation, which represses JA defense responses upon infection by the fungal pathogen Botrytis cinerea. Acts as a negative regulator of JA-mediated defense responses upon infestation by the herbivorous caterpillar Mamestra brassicae. May be involved in the catabolism of cytotoxic polycyclic aromatic hydrocarbons (PAHs). In Arabidopsis thaliana (Mouse-ear cress), this protein is Jasmonate-induced oxygenase 2.